The primary structure comprises 89 residues: Small ribosomal subunit protein uS17 (89 aa).

Belongs to the universal ribosomal protein uS17 family. Part of the 30S ribosomal subunit.

One of the primary rRNA binding proteins, it binds specifically to the 5'-end of 16S ribosomal RNA. The chain is Small ribosomal subunit protein uS17 from Polaromonas naphthalenivorans (strain CJ2).